Consider the following 97-residue polypeptide: Large ribosomal subunit protein eL21 (97 aa).

A compositionally biased stretch (basic residues) spans 1-24 (MVQKAHSFRRKTRKKLRKHPRRRG). The segment at 1-25 (MVQKAHSFRRKTRKKLRKHPRRRGL) is disordered.

The protein belongs to the eukaryotic ribosomal protein eL21 family.

The polypeptide is Large ribosomal subunit protein eL21 (rpl21e) (Pyrococcus abyssi (strain GE5 / Orsay)).